The sequence spans 1076 residues: Hormone-sensitive lipase (1076 aa).

2 stretches are compositionally biased toward polar residues: residues 1–12 (MEPGSKSVSRSD) and 38–64 (ESKTLQGSNTQQKPASNQRPLTQQETP). Disordered stretches follow at residues 1–198 (MEPG…KSKQ) and 229–250 (VTDSESESDVGSSSDTDSPATM). A compositionally biased stretch (basic and acidic residues) spans 65-77 (AQHDAESQKEPRA). Polar residues predominate over residues 94–116 (APQQSPYIQRVLLTQQEAASQQG). Over residues 140 to 149 (GPGPGEPPPA) the composition is skewed to pro residues. The segment covering 150 to 161 (QQEAESTPAAQA) has biased composition (low complexity). Residues 172-198 (PTESTSQETPEQSDKQTTPVQGAKSKQ) show a composition bias toward polar residues. A compositionally biased stretch (low complexity) spans 237 to 246 (DVGSSSDTDS). The Involved in the stabilization of the negatively charged intermediate by the formation of the oxyanion hole motif lies at 651–653 (HGG). Ser725 is an active-site residue. Residues 838 to 930 (KSQKMSEPIA…EAEAKNELSP (93 aa)) form a disordered region. Ser853 carries the post-translational modification Phosphoserine. Ser855 is subject to Phosphoserine; by AMPK. Positions 882–908 (RGNSETSSDTPEMSLSAETLSPSTPSD) are enriched in polar residues. Residues Ser897, Ser929, Ser950, and Ser951 each carry the phosphoserine modification. Catalysis depends on residues Asp994 and His1024. Residues 1055–1076 (AGAGPSGETGAAGVDGGCGGRH) are disordered. The segment covering 1067 to 1076 (GVDGGCGGRH) has biased composition (gly residues).

Belongs to the 'GDXG' lipolytic enzyme family. Monomer and homodimer. Interacts with CAVIN1 in the adipocyte cytoplasm. Interacts with PLIN5. Phosphorylation by AMPK reduces its translocation towards the lipid droplets. Testis.

It is found in the cell membrane. Its subcellular location is the membrane. The protein resides in the caveola. It localises to the cytoplasm. The protein localises to the cytosol. It is found in the lipid droplet. The enzyme catalyses a diacylglycerol + H2O = a monoacylglycerol + a fatty acid + H(+). It catalyses the reaction a triacylglycerol + H2O = a diacylglycerol + a fatty acid + H(+). It carries out the reaction a monoacylglycerol + H2O = glycerol + a fatty acid + H(+). The catalysed reaction is Hydrolyzes glycerol monoesters of long-chain fatty acids.. The enzyme catalyses 1,2-di-(9Z-octadecenoyl)-glycerol + (9Z)-octadecenoate + H(+) = 1,2,3-tri-(9Z-octadecenoyl)-glycerol + H2O. It catalyses the reaction 2,3-di-(9Z)-octadecenoyl-sn-glycerol + H2O = 2-(9Z-octadecenoyl)-glycerol + (9Z)-octadecenoate + H(+). It carries out the reaction cholesteryl (9Z-octadecenoate) + H2O = cholesterol + (9Z)-octadecenoate + H(+). The catalysed reaction is 1,2,3-tri-(9Z-octadecenoyl)-glycerol + H2O = di-(9Z)-octadecenoylglycerol + (9Z)-octadecenoate + H(+). The enzyme catalyses all-trans-retinyl hexadecanoate + H2O = all-trans-retinol + hexadecanoate + H(+). It catalyses the reaction 1,2-di-(9Z-octadecenoyl)-glycerol + H2O = (9Z-octadecenoyl)-glycerol + (9Z)-octadecenoate + H(+). It carries out the reaction 2-(5Z,8Z,11Z,14Z-eicosatetraenoyl)-glycerol + H2O = glycerol + (5Z,8Z,11Z,14Z)-eicosatetraenoate + H(+). The catalysed reaction is 1-(9Z-octadecenoyl)-glycerol + H2O = glycerol + (9Z)-octadecenoate + H(+). The enzyme catalyses 2-(9Z-octadecenoyl)-glycerol + H2O = glycerol + (9Z)-octadecenoate + H(+). It catalyses the reaction 1-O-hexadecyl-2-acetyl-sn-glycerol + H2O = 1-O-hexadecyl-sn-glycerol + acetate + H(+). It carries out the reaction 1,2-di-(9Z-octadecenoyl)-sn-glycerol + H2O = (9Z-octadecenoyl)-glycerol + (9Z)-octadecenoate + H(+). The catalysed reaction is 1,3-di-(9Z-octadecenoyl)-glycerol + H2O = 1-(9Z-octadecenoyl)-glycerol + (9Z)-octadecenoate + H(+). The enzyme catalyses 1,2-di-(9Z-octadecenoyl)-glycerol + H2O = 2-(9Z-octadecenoyl)-glycerol + (9Z)-octadecenoate + H(+). It functions in the pathway glycerolipid metabolism; triacylglycerol degradation. Its activity is regulated as follows. Retinyl ester hydrolase is inhibited by bis-p-nitrophenyl phosphate. In terms of biological role, lipase with broad substrate specificity, catalyzing the hydrolysis of triacylglycerols (TAGs), diacylglycerols (DAGs), monoacylglycerols (MAGs), cholesteryl esters and retinyl esters. Shows a preferential hydrolysis of DAGs over TAGs and MAGs and preferentially hydrolyzes the fatty acid (FA) esters at the sn-3 position of the glycerol backbone in DAGs. Preferentially hydrolyzes FA esters at the sn-1 and sn-2 positions of the glycerol backbone in TAGs. Catalyzes the hydrolysis of 2-arachidonoylglycerol, an endocannabinoid and of 2-acetyl monoalkylglycerol ether, the penultimate precursor of the pathway for de novo synthesis of platelet-activating factor. In adipose tissue and heart, it primarily hydrolyzes stored triglycerides to free fatty acids, while in steroidogenic tissues, it principally converts cholesteryl esters to free cholesterol for steroid hormone production. This Homo sapiens (Human) protein is Hormone-sensitive lipase (LIPE).